A 338-amino-acid chain; its full sequence is Aspartate-semialdehyde dehydrogenase (338 aa).

NADP(+) contacts are provided by residues 13–16 (TGNV) and 41–42 (NS). R101 is a binding site for phosphate. The Acyl-thioester intermediate role is filled by C132. A substrate-binding site is contributed by Q159. 162-163 (SG) is a binding site for NADP(+). K216 lines the phosphate pocket. R237 serves as a coordination point for substrate. H244 functions as the Proton acceptor in the catalytic mechanism. N317 is an NADP(+) binding site.

This sequence belongs to the aspartate-semialdehyde dehydrogenase family. In terms of assembly, homodimer.

The catalysed reaction is L-aspartate 4-semialdehyde + phosphate + NADP(+) = 4-phospho-L-aspartate + NADPH + H(+). It functions in the pathway amino-acid biosynthesis; L-lysine biosynthesis via DAP pathway; (S)-tetrahydrodipicolinate from L-aspartate: step 2/4. The protein operates within amino-acid biosynthesis; L-methionine biosynthesis via de novo pathway; L-homoserine from L-aspartate: step 2/3. It participates in amino-acid biosynthesis; L-threonine biosynthesis; L-threonine from L-aspartate: step 2/5. Its function is as follows. Catalyzes the NADPH-dependent formation of L-aspartate-semialdehyde (L-ASA) by the reductive dephosphorylation of L-aspartyl-4-phosphate. In Rickettsia bellii (strain RML369-C), this protein is Aspartate-semialdehyde dehydrogenase.